The sequence spans 345 residues: S-adenosylmethionine:tRNA ribosyltransferase-isomerase (345 aa).

This sequence belongs to the QueA family. Monomer.

It is found in the cytoplasm. The catalysed reaction is 7-aminomethyl-7-carbaguanosine(34) in tRNA + S-adenosyl-L-methionine = epoxyqueuosine(34) in tRNA + adenine + L-methionine + 2 H(+). It participates in tRNA modification; tRNA-queuosine biosynthesis. In terms of biological role, transfers and isomerizes the ribose moiety from AdoMet to the 7-aminomethyl group of 7-deazaguanine (preQ1-tRNA) to give epoxyqueuosine (oQ-tRNA). The chain is S-adenosylmethionine:tRNA ribosyltransferase-isomerase from Acidiphilium cryptum (strain JF-5).